The following is a 360-amino-acid chain: DNA replication and repair protein RecF (360 aa).

An ATP-binding site is contributed by 30-37 (GHNGSGKT).

The protein belongs to the RecF family.

It localises to the cytoplasm. The RecF protein is involved in DNA metabolism; it is required for DNA replication and normal SOS inducibility. RecF binds preferentially to single-stranded, linear DNA. It also seems to bind ATP. The sequence is that of DNA replication and repair protein RecF from Actinobacillus pleuropneumoniae serotype 5b (strain L20).